The sequence spans 154 residues: Ribonuclease K6 (154 aa).

The first 27 residues, 1–27 (MGPHLLGRSSLLLLLLGMWWSVRPLCA), serve as a signal peptide directing secretion. The active-site Proton acceptor is His-42. 4 disulfides stabilise this stretch: Cys-50/Cys-108, Cys-64/Cys-118, Cys-82/Cys-133, and Cys-89/Cys-96. Asn-59 is a glycosylation site (N-linked (GlcNAc...) asparagine). Residues 65–69 (KPENT) and Lys-90 contribute to the substrate site. Asn-104 is a glycosylation site (N-linked (GlcNAc...) asparagine). The active-site Proton donor is His-149.

The protein belongs to the pancreatic ribonuclease family. Interacts (via N-terminus) with bacterial lipopolysaccharide (LPS). Kidney (at protein level).

It is found in the secreted. The protein localises to the lysosome. The protein resides in the cytoplasmic granule. Ribonuclease which shows a preference for the pyrimidines uridine and cytosine. Has potent antimicrobial activity against a range of Gram-positive and Gram-negative bacteria, including P.aeruginosa, A.baumanii, M.luteus, S.aureus, E.faecalis, E.faecium, S.saprophyticus and E.coli. Causes loss of bacterial membrane integrity, and also promotes agglutination of Gram-negative bacteria. Probably contributes to urinary tract sterility. Bactericidal activity is independent of RNase activity. The chain is Ribonuclease K6 (RNASE6) from Bos taurus (Bovine).